The following is a 1369-amino-acid chain: Neurofascin (1369 aa).

An N-terminal signal peptide occupies residues 1–25; sequence MVLHSHQLTYAGIAFALCLHHLISA. The Extracellular portion of the chain corresponds to 26–1235; it reads IEVPLDSNIQ…NHVDIATQGW (1210 aa). Ig-like C2-type domains are found at residues 42–138 and 144–231; these read PTIT…LQVS and PKEK…NPYT. Disulfide bonds link cysteine 64-cysteine 119 and cysteine 163-cysteine 214. Asparagine 241, asparagine 247, and asparagine 323 each carry an N-linked (GlcNAc...) asparagine glycan. Ig-like C2-type domains lie at 262–350, 355–442, 448–535, and 539–626; these read PSFM…ISVR, PYWL…AFVS, PRIL…VRLE, and PTRI…AYLT. 2 cysteine pairs are disulfide-bonded: cysteine 286/cysteine 334 and cysteine 376/cysteine 426. N-linked (GlcNAc...) asparagine glycans are attached at residues asparagine 427, asparagine 464, and asparagine 501. 2 disulfides stabilise this stretch: cysteine 470-cysteine 519 and cysteine 561-cysteine 610. 4 Fibronectin type-III domains span residues 645–740, 745–838, 843–945, and 949–1057; these read RPRD…TSGA, NPTG…SGED, APTD…TPEG, and SPRY…TPAS. A glycan (N-linked (GlcNAc...) asparagine) is linked at asparagine 692. A compositionally biased stretch (polar residues) spans 730–739; sequence MPSERYQTSG. Residues 730 to 753 are disordered; it reads MPSERYQTSGARPEINPTGVQGAG. Residues asparagine 767, asparagine 793, asparagine 853, asparagine 994, and asparagine 1009 are each glycosylated (N-linked (GlcNAc...) asparagine). The interval 1078 to 1097 is disordered; that stretch reads TTATPTTETPPTEIPTTAIP. 4 N-linked (GlcNAc...) asparagine glycosylation sites follow: asparagine 1133, asparagine 1150, asparagine 1156, and asparagine 1171. Positions 1133 to 1222 constitute a Fibronectin type-III 5 domain; it reads NGSSIWDIRA…SYITFTTSSA (90 aa). A helical membrane pass occupies residues 1236–1256; it reads FIGLMCAIALLVLILLIVCFI. Over 1257 to 1369 the chain is Cytoplasmic; it reads KRSRGGKYPV…SPVNAIYSLA (113 aa). Composition is skewed to basic and acidic residues over residues 1266–1282 and 1289–1298; these read VRDN…KNVE and RSLESDEDNK. The segment at 1266 to 1369 is disordered; sequence VRDNKDEHLN…SPVNAIYSLA (104 aa). Polar residues predominate over residues 1300–1313; the sequence is LPNSQTSLDGTIKQ.

Belongs to the immunoglobulin superfamily. L1/neurofascin/NgCAM family. In terms of processing, N-glycosylated and O-glycosylated. May be proteolytically cleaved at Arg-636.

It is found in the cell membrane. Functionally, cell adhesion, ankyrin-binding protein which may be involved in neurite extension, axonal guidance, synaptogenesis, myelination and neuron-glial cell interactions. The polypeptide is Neurofascin (NFASC) (Gallus gallus (Chicken)).